A 161-amino-acid chain; its full sequence is Allophycocyanin alpha chain 2 (161 aa).

Asn71 carries the N4-methylasparagine modification. (2R,3E)-phycocyanobilin is bound at residue Cys81.

The protein belongs to the phycobiliprotein family. Component of the phycobilisome. Heterodimer of an alpha and a beta chain. In terms of processing, contains one covalently linked bilin chromophore.

It localises to the cellular thylakoid membrane. Light-harvesting photosynthetic bile pigment-protein from the phycobiliprotein complex. Allophycocyanin has a maximum absorption at approximately 650 nanometers. In Microchaete diplosiphon (Fremyella diplosiphon), this protein is Allophycocyanin alpha chain 2 (apcA2).